A 188-amino-acid chain; its full sequence is dCTP deaminase (188 aa).

DCTP is bound by residues 111-116 (KSTYAR), 135-137 (TLE), Gln-156, Tyr-170, and Gln-180. Glu-137 serves as the catalytic Proton donor/acceptor.

This sequence belongs to the dCTP deaminase family. As to quaternary structure, homotrimer.

It catalyses the reaction dCTP + H2O + H(+) = dUTP + NH4(+). The protein operates within pyrimidine metabolism; dUMP biosynthesis; dUMP from dCTP (dUTP route): step 1/2. Its function is as follows. Catalyzes the deamination of dCTP to dUTP. The chain is dCTP deaminase from Polaromonas sp. (strain JS666 / ATCC BAA-500).